The following is a 101-amino-acid chain: Cell division suppressor protein YneA (101 aa).

Positions 35–86 (MTVTVASGDTLWGLAKQYEPAHGLSPDEFIRWVVDVNRLPSSRLTAGEQIVI) constitute a LysM domain.

Belongs to the YneA family.

It localises to the cytoplasm. Inhibits cell division during the SOS response. Affects a later stage of the cell division protein assembly, after the assembly of the Z ring, by probably suppressing recruitment of FtsL and/or DivIC to the division machinery. The chain is Cell division suppressor protein YneA from Geobacillus thermodenitrificans (strain NG80-2).